The sequence spans 239 residues: Calcium load-activated calcium channel (239 aa).

The Lumenal portion of the chain corresponds to 1-55 (MPRKRKCDLRAVRVGLLLGGGGVYGSRFRFTFPGCRALSPWRVRVQRRRCEMSTM). Residues 56–83 (FADTLLIVFISVCTALLAEGITWVLVYR) form a helical membrane-spanning segment. Positions 83-140 (RTDKYKRLKAEVEKQSKKLEKKKETITESAGRQQKKKIERQEEKLKNNNRDLSMVRMK) form a coiled coil. The Cytoplasmic portion of the chain corresponds to 84 to 137 (TDKYKRLKAEVEKQSKKLEKKKETITESAGRQQKKKIERQEEKLKNNNRDLSMV). At Ser-111 the chain carries Phosphoserine. A helical transmembrane segment spans residues 138–157 (RMKSMFAIGFCFTALMGMFN). The Lumenal portion of the chain corresponds to 158 to 171 (SIFDGRVVAKLPFT). The stretch at 172–181 (PLSYIQGLSH) is an intramembrane region. The Lumenal segment spans residues 182–191 (RNLLGDDTTD). A helical transmembrane segment spans residues 192 to 213 (CSFIFLYILCTMSIRQNIQKIL). At 214 to 239 (GLAPSRAATKQAGGFLGPPPPSGKFS) the chain is on the cytoplasmic side. Ser-239 is modified (phosphoserine).

It belongs to the TMCO1 family. In terms of assembly, homodimer and homotetramer. Homodimer under resting conditions; forms homotetramers following ER calcium overload. Component of the GET- and EMC-like (GEL) complex, composed of RAB5IF/OPTI and TMCO1. The GEL complex is part of the multi-pass translocon (MPT) complex, composed of three subcomplexes, the GEL complex (composed of RAB5IF/OPTI and TMCO1), the BOS complex (composed of NCLN/Nicalin, NOMO and TMEM147) and the PAT complex (composed of WDR83OS/Asterix and CCDC47). The MPT complex associates with the SEC61 complex. Widely expressed in adult and fetal tissues, with higher levels in thymus, prostate, testis and small intestine and lower levels in brain, placenta, lung and kidney. Present in most tissues in the eye, including the trabecular meshwork and retina (at protein level).

Its subcellular location is the endoplasmic reticulum membrane. It localises to the golgi apparatus membrane. It is found in the mitochondrion membrane. It catalyses the reaction Ca(2+)(in) = Ca(2+)(out). Functionally, endoplasmic reticulum (ER) calcium-selective channel preventing intracellular Ca2(+) stores from overfilling and maintaining calcium homeostasis in the ER. In response to endoplasmic reticulum (ER) Ca2(+) overloading, assembles into a homotetramer, forming a functional calcium-selective channel facilitating Ca2(+) release. Mediates ER Ca2(+) homeostasis in osteoblasts and plays a key role in bone formation, via the CaMKII-HDAC4-RUNX2 signaling axis. Component of the multi-pass translocon (MPT) complex that mediates insertion of multi-pass membrane proteins into the lipid bilayer of membranes. The MPT complex takes over after the SEC61 complex: following membrane insertion of the first few transmembrane segments of proteins by the SEC61 complex, the MPT complex occludes the lateral gate of the SEC61 complex to promote insertion of subsequent transmembrane regions. Within the MPT complex, the GEL subcomplex may mediate insertion of transmembrane regions into the membrane. This is Calcium load-activated calcium channel from Homo sapiens (Human).